The primary structure comprises 1337 residues: uncharacterized protein (1337 aa).

Disordered regions lie at residues 1-94 (MPTS…QSSA) and 119-174 (ARDI…PSFF). 2 stretches are compositionally biased toward low complexity: residues 18–37 (SNTS…ASGS) and 68–79 (SSTHFQSSHSVS). Positions 80-94 (NAHNQSPLNQSQSSA) are enriched in polar residues. Low complexity predominate over residues 123–147 (PQQPSHSQNPSSSSSSSSSQSSQHS). Residues 157–167 (NEKKSLDDPSP) show a composition bias toward basic and acidic residues. 6 helical membrane-spanning segments follow: residues 209–229 (GLKP…LVLA), 241–261 (FFVV…PMLW), 267–287 (FLLL…ATVA), 328–348 (VRPL…ALFI), 361–381 (CVFS…YPYF), and 387–407 (LFFI…TLFI). Disordered stretches follow at residues 623–662 (SHVR…SHKS) and 868–894 (YDEN…DADH). The segment covering 626–644 (RTGSNNSEAPLAAKTSTTK) has biased composition (polar residues). Basic and acidic residues predominate over residues 868 to 880 (YDENIHNDVDKDM). Transmembrane regions (helical) follow at residues 917 to 937 (MNVF…PAFC), 975 to 995 (IFGT…GSGH), 997 to 1017 (LGNA…IQFI), 1021 to 1041 (FVIL…LTVT), 1066 to 1086 (FLTV…PQPR), and 1275 to 1295 (FAVG…IMFI).

Its subcellular location is the membrane. This is an uncharacterized protein from Schizosaccharomyces pombe (strain 972 / ATCC 24843) (Fission yeast).